Reading from the N-terminus, the 955-residue chain is Kinesin heavy chain isoform 5C (955 aa).

Positions 8 to 327 (SIKVMCRFRP…LMFGQRAKTI (320 aa)) constitute a Kinesin motor domain. ATP-binding residues include glutamine 87, serine 89, serine 90, glycine 91, lysine 92, threonine 93, histidine 94, and lysine 99. The microtubule-binding stretch occupies residues 174-315 (VSSPEEVMDV…PSVFNEAETK (142 aa)). The stretch at 332–366 (SVNLELTAEEWKKKYEKEKEKNKALKSVIQHLEVE) forms a coiled coil. The residue at position 403 (threonine 403) is a Phosphothreonine. Coiled coils occupy residues 413–538 (KEKY…LQEL) and 590–913 (ISKM…KNMA). Residues 859 to 955 (CELPKLEKRL…GSSNSTHYQK (97 aa)) are globular. A disordered region spans residues 909 to 955 (AKNMARRAHSAQIAKPIRPGHYPASSPTAVHAVRGGGGSSNSTHYQK).

Belongs to the TRAFAC class myosin-kinesin ATPase superfamily. Kinesin family. Kinesin subfamily. Oligomer composed of two heavy chains and two light chains. Interacts with GRIP1. Interacts with TRAK1. Interacts with ZFYVE27. Interacts with KLC3.

It is found in the cytoplasm. Its subcellular location is the cytoskeleton. The protein resides in the cell projection. The protein localises to the dendrite. It carries out the reaction ATP + H2O = ADP + phosphate + H(+). In terms of biological role, microtubule-associated force-producing protein that may play a role in organelle transport. Has ATPase activity. Involved in synaptic transmission. Mediates dendritic trafficking of mRNAs. Required for anterograde axonal transportation of MAPK8IP3/JIP3 which is essential for MAPK8IP3/JIP3 function in axon elongation. The chain is Kinesin heavy chain isoform 5C (Kif5c) from Rattus norvegicus (Rat).